The sequence spans 240 residues: LexA repressor (240 aa).

The H-T-H motif DNA-binding region spans 26–46 (FDEMKDALDLASKSGIHRLIT). Positions 78–113 (QPRRGFSPSVIEGSLGKPQPVQPPAPAKPANDENNS) are disordered. Residues Ser-160 and Lys-198 each act as for autocatalytic cleavage activity in the active site.

It belongs to the peptidase S24 family. As to quaternary structure, homodimer.

It carries out the reaction Hydrolysis of Ala-|-Gly bond in repressor LexA.. In terms of biological role, represses a number of genes involved in the response to DNA damage (SOS response), including recA and lexA. In the presence of single-stranded DNA, RecA interacts with LexA causing an autocatalytic cleavage which disrupts the DNA-binding part of LexA, leading to derepression of the SOS regulon and eventually DNA repair. The protein is LexA repressor of Rhizobium rhizogenes (strain K84 / ATCC BAA-868) (Agrobacterium radiobacter).